The primary structure comprises 393 residues: Pyrimidine monooxygenase RutA (393 aa).

FMN-binding positions include 79–80, asparagine 145, glutamate 154, 170–171, and serine 220; these read IK and RY.

The protein belongs to the NtaA/SnaA/DszA monooxygenase family. RutA subfamily.

The enzyme catalyses uracil + FMNH2 + NADH + O2 = (Z)-3-ureidoacrylate + FMN + NAD(+) + H2O + H(+). It carries out the reaction thymine + FMNH2 + NADH + O2 = (Z)-2-methylureidoacrylate + FMN + NAD(+) + H2O + H(+). Its function is as follows. Catalyzes the pyrimidine ring opening between N-3 and C-4 by an unusual flavin hydroperoxide-catalyzed mechanism, adding oxygen atoms in the process to yield ureidoacrylate peracid, that immediately reacts with FMN forming ureidoacrylate and FMN-N(5)-oxide. The FMN-N(5)-oxide reacts spontaneously with NADH to produce FMN. Requires the flavin reductase RutF to regenerate FMN in vivo. This is Pyrimidine monooxygenase RutA from Escherichia coli O139:H28 (strain E24377A / ETEC).